Reading from the N-terminus, the 267-residue chain is MSFPYFISPEQAMRERSELARKGIARGKSVVALAFAGGVLFVAENPSRSLQKISELYDRVGFAAAGKFNEFDNLRRGGIQFADTRGYAYDRRDVTGRQLANVYAQTLGTIFTEQAKPYEVELCVAEVAHYGESKAPELYRITYDGSIADEPHFVVMGGTTEPITTALKNTYTENADLPDALGIAVEALRAGSAENSSNDQPVLGVASLEAAILDANKPRRAFRRLTRSTLETLLQERDSKESAESEEPKESEEGKKTGKKSDADSSD.

Residues 231-267 are disordered; it reads ETLLQERDSKESAESEEPKESEEGKKTGKKSDADSSD. Residues 234 to 267 are compositionally biased toward basic and acidic residues; the sequence is LQERDSKESAESEEPKESEEGKKTGKKSDADSSD.

Belongs to the peptidase T1A family. The 20S proteasome core is composed of 14 alpha and 14 beta subunits that assemble into four stacked heptameric rings, resulting in a barrel-shaped structure. The two inner rings, each composed of seven catalytic beta subunits, are sandwiched by two outer rings, each composed of seven alpha subunits. The catalytic chamber with the active sites is on the inside of the barrel. Has a gated structure, the ends of the cylinder being occluded by the N-termini of the alpha-subunits. Is capped by the proteasome-associated ATPase, ARC.

Its subcellular location is the cytoplasm. Its pathway is protein degradation; proteasomal Pup-dependent pathway. The formation of the proteasomal ATPase ARC-20S proteasome complex, likely via the docking of the C-termini of ARC into the intersubunit pockets in the alpha-rings, may trigger opening of the gate for substrate entry. Interconversion between the open-gate and close-gate conformations leads to a dynamic regulation of the 20S proteasome proteolysis activity. Component of the proteasome core, a large protease complex with broad specificity involved in protein degradation. This chain is Proteasome subunit alpha, found in Mycobacterium marinum (strain ATCC BAA-535 / M).